A 259-amino-acid chain; its full sequence is 5'-nucleotidase SurE (259 aa).

A divalent metal cation contacts are provided by D11, D12, S42, and N99.

The protein belongs to the SurE nucleotidase family. The cofactor is a divalent metal cation.

The protein localises to the cytoplasm. The enzyme catalyses a ribonucleoside 5'-phosphate + H2O = a ribonucleoside + phosphate. Functionally, nucleotidase that shows phosphatase activity on nucleoside 5'-monophosphates. The chain is 5'-nucleotidase SurE from Cytophaga hutchinsonii (strain ATCC 33406 / DSM 1761 / CIP 103989 / NBRC 15051 / NCIMB 9469 / D465).